Consider the following 870-residue polypeptide: Leucine--tRNA ligase (870 aa).

The short motif at Pro-42–His-52 is the 'HIGH' region element. Residues Lys-629–Ser-633 carry the 'KMSKS' region motif. Lys-632 contacts ATP.

The protein belongs to the class-I aminoacyl-tRNA synthetase family.

It localises to the cytoplasm. The catalysed reaction is tRNA(Leu) + L-leucine + ATP = L-leucyl-tRNA(Leu) + AMP + diphosphate. This chain is Leucine--tRNA ligase, found in Ectopseudomonas mendocina (strain ymp) (Pseudomonas mendocina).